We begin with the raw amino-acid sequence, 482 residues long: Probable cytochrome P450 508D1 (482 aa).

The helical transmembrane segment at methionine 1–lysine 21 threads the bilayer. Cysteine 428 is a binding site for heme.

This sequence belongs to the cytochrome P450 family. The cofactor is heme.

The protein localises to the membrane. The polypeptide is Probable cytochrome P450 508D1 (cyp508D1) (Dictyostelium discoideum (Social amoeba)).